We begin with the raw amino-acid sequence, 66 residues long: GMGLANLLYAPVLLLLRNVGLLTRSRSERDVLLDEPPQGLYDAVRLRERPVSGQDGEPRSPPGPFD.

The chain crosses the membrane as a helical span at residues 1-15 (GMGLANLLYAPVLLL). The Cytoplasmic segment spans residues 16–66 (LRNVGLLTRSRSERDVLLDEPPQGLYDAVRLRERPVSGQDGEPRSPPGPFD). The tract at residues 43–66 (AVRLRERPVSGQDGEPRSPPGPFD) is disordered.

Belongs to the major facilitator superfamily. Vesicular transporter family. As to quaternary structure, interacts with SEC14L1.

Its subcellular location is the cytoplasmic vesicle. The protein resides in the secretory vesicle. The protein localises to the synaptic vesicle membrane. It catalyses the reaction acetylcholine(out) + 2 H(+)(in) = acetylcholine(in) + 2 H(+)(out). It carries out the reaction choline(in) + 2 H(+)(out) = choline(out) + 2 H(+)(in). The enzyme catalyses serotonin(in) + 2 H(+)(out) = serotonin(out) + 2 H(+)(in). In terms of biological role, electrogenic antiporter that exchanges one cholinergic neurotransmitter, acetylcholine or choline, with two intravesicular protons across the membrane of synaptic vesicles. Uses the electrochemical proton gradient established by the V-type proton-pump ATPase to store neurotransmitters inside the vesicles prior to their release via exocytosis. Determines cholinergic vesicular quantal size at presynaptic nerve terminals in developing neuro-muscular junctions with an impact on motor neuron differentiation and innervation pattern. Part of forebrain cholinergic system, regulates hippocampal synapse transmissions that underlie spatial memory formation. Can transport serotonin. The protein is Vesicular acetylcholine transporter (SLC18A3) of Macaca fuscata fuscata (Japanese macaque).